Here is a 347-residue protein sequence, read N- to C-terminus: NADH-ubiquinone oxidoreductase chain 2 (347 aa).

10 consecutive transmembrane segments (helical) span residues Met-1–Ala-21, His-25–Met-45, Tyr-59–Val-79, Phe-111–Leu-131, Ile-149–Gly-169, Ile-178–Pro-198, Thr-201–Leu-221, Met-237–Leu-257, Asn-274–Met-294, and Leu-326–Leu-346.

It belongs to the complex I subunit 2 family. As to quaternary structure, core subunit of respiratory chain NADH dehydrogenase (Complex I) which is composed of 45 different subunits. Interacts with TMEM242.

It localises to the mitochondrion inner membrane. It carries out the reaction a ubiquinone + NADH + 5 H(+)(in) = a ubiquinol + NAD(+) + 4 H(+)(out). In terms of biological role, core subunit of the mitochondrial membrane respiratory chain NADH dehydrogenase (Complex I) which catalyzes electron transfer from NADH through the respiratory chain, using ubiquinone as an electron acceptor. Essential for the catalytic activity and assembly of complex I. This Pteropus rodricensis (Rodriguez flying fox) protein is NADH-ubiquinone oxidoreductase chain 2.